The primary structure comprises 854 residues: Translation initiation factor IF-2 (854 aa).

Over residues 61-72 the composition is skewed to basic residues; the sequence is KNIKTPTAKKPK. 2 disordered regions span residues 61–115 and 167–186; these read KNIK…LASA and ESLKKKKKEKKSFVASKKES. Residues 73–108 are compositionally biased toward basic and acidic residues; sequence KENAKDQEKLNESEKKEPKKEESKEQEKQEIIDTHK. The 168-residue stretch at 353–520 folds into the tr-type G domain; that stretch reads TRAPVITIMG…IVLLQADILE (168 aa). Residues 362–369 form a G1 region; that stretch reads GHVDHGKT. 362 to 369 contacts GTP; the sequence is GHVDHGKT. The G2 stretch occupies residues 387-391; the sequence is GITQH. The interval 408-411 is G3; the sequence is DTPG. Residues 408–412 and 462–465 each bind GTP; these read DTPGH and NKMD. Positions 462–465 are G4; it reads NKMD. Residues 498–500 form a G5 region; sequence SAK.

It belongs to the TRAFAC class translation factor GTPase superfamily. Classic translation factor GTPase family. IF-2 subfamily.

The protein localises to the cytoplasm. In terms of biological role, one of the essential components for the initiation of protein synthesis. Protects formylmethionyl-tRNA from spontaneous hydrolysis and promotes its binding to the 30S ribosomal subunits. Also involved in the hydrolysis of GTP during the formation of the 70S ribosomal complex. The sequence is that of Translation initiation factor IF-2 from Campylobacter jejuni subsp. doylei (strain ATCC BAA-1458 / RM4099 / 269.97).